The primary structure comprises 249 residues: Low affinity immunoglobulin gamma Fc region receptor III-A (249 aa).

The first 20 residues, 1 to 20, serve as a signal peptide directing secretion; sequence MWQLLLPTALVLTAFSGIQA. Over 21–203 the chain is Extracellular; sequence GLQKAVVNLD…SPSMFPPWHQ (183 aa). Ig-like C2-type domains are found at residues 22–102 and 119–188; these read LQKA…VQLE and EGDP…FRIS. Intrachain disulfides connect cysteine 46–cysteine 88 and cysteine 127–cysteine 171. 3 N-linked (GlcNAc...) asparagine glycosylation sites follow: asparagine 62, asparagine 164, and asparagine 179. The chain crosses the membrane as a helical span at residues 204 to 224; that stretch reads ITFCLLIGLLFAIDTVLYFSV. Over 225-249 the chain is Cytoplasmic; that stretch reads RRGLQSPVADYEEPKIQWSKEPQDK. Tyrosine 235 bears the Phosphotyrosine mark.

As to quaternary structure, forms a heterooligomeric complex with ITAM-containing signaling subunits FCER1G. Interacts (via transmembrane domain) with signaling subunits; this interaction is a prerequisite for receptor complex expression on the cell surface and intracellular signal transduction. Binds the Fc region of antigen-complexed IgG. In terms of processing, N-glycosylated. Phosphorylated following receptor ligation. In terms of tissue distribution, detected on myeloid cells, peripheral blood monocytes, splenic and bone marrow dendritic cells, and thioglycollate-elicited macrophages and neutrophils but absent from lymphoid populations with no expression observed on T cells, B cells, NK cells or other granulocytes (at protein level). Expressed in peripheral blood leukocytes, spleen, liver, thymus and small intestine. Expressed in splenic dendritic cell subsets (at protein level).

The protein localises to the cell membrane. Receptor for the invariable Fc fragment of immunoglobulin gamma (IgG). Binds with intermediate affinity to both IgG2a and IgG2b. Can bind to IgG2a and IgG2b monomers. Does not display binding to IgG1 or IgG3. Recognizes neutralizing virus-specific IgGs displayed on the cell surface of infected cells and triggers antibody-dependent cellular cytotoxicity (ADCC). Confers protection to lethal influenza virus infection. On splenic dendritic cells, uptakes antigen immune complexes and efficiently divert them into MHC class I and II antigen presentation pathways to provide for superior priming of CD4-positive and CD8-positive T cell immune responses. Mediates neutrophil activation by IgG complexes redundantly with FCGR2A. Plays a role in promoting bone resorption by enhancing osteoclast differentiation following binding to IgG2a. Also acts as a receptor for the Fc region of immunoglobulin epsilon (IgE). Binds with low affinity to both the a and b allotypes of IgE. Has also been shown to bind to IgE allotype a only but not to allotype b. Binds aggregated IgE but not the monomeric form and bound monomeric IgG is readily displaced by IgE complexes. Binding to IgE promotes macrophage-mediated phagocytosis, antigen presentation to T cells, production of pro-inflammatory cytokines and the late phase of cutaneous allergic reactions. Mediates enhanced ADCC in response to afucosylated IgGs. This is Low affinity immunoglobulin gamma Fc region receptor III-A from Mus musculus (Mouse).